The sequence spans 302 residues: MTLPPLSHLDRLEAESIHILREVAAEFRVPVMLYSVGKDSSVLLHLLLKAFAPSRPPIPLLHIDTRWKFREMIAFRDRRAAETGVDLRVHINPDGVMQDVGPISHGAAVHTDIMKTQGLKQALEHGGFDAAIGGARRDEEKSRAKERVFSFRTARHRWDPKNQRPELWNLYNARTGPGESVRVFPLSNWTELDIWLYIYREKIPVVPLYFAAPRPVVERDGAWIMVDDARLPLHPGETPQLRSVRFRTLGCYPLTGAIDSNADTLEAVIAEMLVNTSSERQGRMIDHAPGASMEQKKLEGYF.

It belongs to the PAPS reductase family. CysD subfamily. In terms of assembly, heterodimer composed of CysD, the smaller subunit, and CysN.

The catalysed reaction is sulfate + ATP + H(+) = adenosine 5'-phosphosulfate + diphosphate. The protein operates within sulfur metabolism; hydrogen sulfide biosynthesis; sulfite from sulfate: step 1/3. In terms of biological role, with CysN forms the ATP sulfurylase (ATPS) that catalyzes the adenylation of sulfate producing adenosine 5'-phosphosulfate (APS) and diphosphate, the first enzymatic step in sulfur assimilation pathway. APS synthesis involves the formation of a high-energy phosphoric-sulfuric acid anhydride bond driven by GTP hydrolysis by CysN coupled to ATP hydrolysis by CysD. The sequence is that of Sulfate adenylyltransferase subunit 2 from Xanthomonas axonopodis pv. citri (strain 306).